We begin with the raw amino-acid sequence, 546 residues long: Chaperonin GroEL 6 (546 aa).

Residues 30–33, Lys51, 87–91, Gly415, and Asp496 contribute to the ATP site; these read TLGP and DGTTT.

This sequence belongs to the chaperonin (HSP60) family. As to quaternary structure, forms a cylinder of 14 subunits composed of two heptameric rings stacked back-to-back. Interacts with the co-chaperonin GroES.

Its subcellular location is the cytoplasm. The enzyme catalyses ATP + H2O + a folded polypeptide = ADP + phosphate + an unfolded polypeptide.. In terms of biological role, together with its co-chaperonin GroES, plays an essential role in assisting protein folding. The GroEL-GroES system forms a nano-cage that allows encapsulation of the non-native substrate proteins and provides a physical environment optimized to promote and accelerate protein folding. This chain is Chaperonin GroEL 6, found in Bradyrhizobium diazoefficiens (strain JCM 10833 / BCRC 13528 / IAM 13628 / NBRC 14792 / USDA 110).